We begin with the raw amino-acid sequence, 787 residues long: Transcription factor SOX-6 (787 aa).

Residues 1-46 (MSSKQATSPFACAADGEDAMTQDLTSREKEEGSDQHVASHLPLHPI) form a disordered region. Positions 25–34 (TSREKEEGSD) are enriched in basic and acidic residues. Position 119 is a phosphothreonine (T119). The stretch at 184 to 262 (LAEKERQLST…LLQQQIQVQG (79 aa)) forms a coiled coil. The interval 340-429 (PGAKMPSTPQ…KSSIPSPIGG (90 aa)) is disordered. A compositionally biased stretch (polar residues) spans 352 to 361 (NTAGTVSPTG). S358 is modified (phosphoserine). T360 bears the Phosphothreonine mark. Glycyl lysine isopeptide (Lys-Gly) (interchain with G-Cter in SUMO) cross-links involve residues K363 and K376. Residues S398 and S401 each carry the phosphoserine modification. Polar residues predominate over residues 398-420 (SPTSPTQNLFPASKTSPVNLPNK). The HMG box DNA-binding region spans 580 to 648 (IKRPMNAFMV…IHLEKYPNYK (69 aa)). Residues 712 to 740 (TPSPQMTSDCSSTSASPEPSLPVIQSTYG) show a composition bias toward polar residues. The segment at 712-787 (TPSPQMTSDC…NEAPEAVSAN (76 aa)) is disordered. Acidic residues predominate over residues 755-768 (NGEDEMEMYDDYED).

Homodimer. Interacts with DAZAP2. May interact with CENPK. Post-translationally, sumoylation inhibits the transcriptional activity.

It localises to the nucleus. Its subcellular location is the cytoplasm. In terms of biological role, transcription factor that plays a key role in several developmental processes, including neurogenesis, chondrocytes differentiation and cartilage formation. Specifically binds the 5'-AACAAT-3' DNA motif present in enhancers and super-enhancers and promotes expression of genes important for chondrogenesis. Required for overt chondrogenesis when condensed prechondrocytes differentiate into early stage chondrocytes: SOX5 and SOX6 cooperatively bind with SOX9 on active enhancers and super-enhancers associated with cartilage-specific genes, and thereby potentiate SOX9's ability to transactivate. Not involved in precartilaginous condensation, the first step in chondrogenesis, during which skeletal progenitors differentiate into prechondrocytes. Together with SOX5, required to form and maintain a pool of highly proliferating chondroblasts between epiphyses and metaphyses, to form columnar chondroblasts, delay chondrocyte prehypertrophy but promote hypertrophy, and to delay terminal differentiation of chondrocytes on contact with ossification fronts. Binds to the proximal promoter region of the myelin protein MPZ gene, and is thereby involved in the differentiation of oligodendroglia in the developing spinal tube. Binds to the gene promoter of MBP and acts as a transcriptional repressor. This is Transcription factor SOX-6 from Pongo abelii (Sumatran orangutan).